The chain runs to 204 residues: Venom allergen 5 (204 aa).

4 disulfides stabilise this stretch: Cys-4-Cys-17, Cys-8-Cys-101, Cys-26-Cys-94, and Cys-170-Cys-187. Residues 45–189 (LKEHNDFRQK…WHKHYLVCNY (145 aa)) form the SCP domain.

This sequence belongs to the CRISP family. Venom allergen 5-like subfamily. As to expression, expressed by the venom gland.

Its subcellular location is the secreted. Its function is as follows. May have an ancestral function in the promotion of ovum fertilization by sperm. The chain is Venom allergen 5 from Vespula flavopilosa (Downy yellowjacket).